The following is a 100-amino-acid chain: NADH-quinone oxidoreductase subunit K (100 aa).

The next 3 membrane-spanning stretches (helical) occupy residues 1-21 (MIGL…GLAG), 28-48 (ILLL…GFVA), and 64-84 (FIIS…ILWF).

Belongs to the complex I subunit 4L family. NDH-1 is composed of 14 different subunits. Subunits NuoA, H, J, K, L, M, N constitute the membrane sector of the complex.

It is found in the cell inner membrane. It catalyses the reaction a quinone + NADH + 5 H(+)(in) = a quinol + NAD(+) + 4 H(+)(out). NDH-1 shuttles electrons from NADH, via FMN and iron-sulfur (Fe-S) centers, to quinones in the respiratory chain. The immediate electron acceptor for the enzyme in this species is believed to be ubiquinone. Couples the redox reaction to proton translocation (for every two electrons transferred, four hydrogen ions are translocated across the cytoplasmic membrane), and thus conserves the redox energy in a proton gradient. The sequence is that of NADH-quinone oxidoreductase subunit K from Helicobacter pylori (strain ATCC 700392 / 26695) (Campylobacter pylori).